Here is a 441-residue protein sequence, read N- to C-terminus: Ribosomal protein uS12 methylthiotransferase RimO (441 aa).

The 111-residue stretch at 7 to 117 folds into the MTTase N-terminal domain; that stretch reads ASIAMISLGC…VVLEVHRAAP (111 aa). [4Fe-4S] cluster is bound by residues Cys16, Cys52, Cys81, Cys150, Cys154, and Cys157. Residues 136 to 373 enclose the Radical SAM core domain; sequence LTPRHYAYLK…MAHQQAISAA (238 aa). One can recognise a TRAM domain in the interval 376-441; it reads QTRVGREIDV…DEYDLHGDAV (66 aa).

Belongs to the methylthiotransferase family. RimO subfamily. [4Fe-4S] cluster is required as a cofactor.

The protein localises to the cytoplasm. It catalyses the reaction L-aspartate(89)-[ribosomal protein uS12]-hydrogen + (sulfur carrier)-SH + AH2 + 2 S-adenosyl-L-methionine = 3-methylsulfanyl-L-aspartate(89)-[ribosomal protein uS12]-hydrogen + (sulfur carrier)-H + 5'-deoxyadenosine + L-methionine + A + S-adenosyl-L-homocysteine + 2 H(+). Its function is as follows. Catalyzes the methylthiolation of an aspartic acid residue of ribosomal protein uS12. In Bordetella petrii (strain ATCC BAA-461 / DSM 12804 / CCUG 43448), this protein is Ribosomal protein uS12 methylthiotransferase RimO.